The following is a 396-amino-acid chain: Pre-mRNA-splicing regulator WTAP (396 aa).

M1 is subject to N-acetylmethionine. S14 carries the post-translational modification Phosphoserine. Low complexity-rich tracts occupy residues Q240–S257 and S278–G291. The disordered stretch occupies residues Q240–L396. Phosphoserine occurs at positions 297, 305, 306, and 341. Residues S305–S316 are compositionally biased toward low complexity. Over residues D340–H351 the composition is skewed to polar residues. T350 carries the post-translational modification Phosphothreonine. The span at H352 to V368 shows a compositional bias: basic and acidic residues. Over residues H380–L396 the composition is skewed to polar residues. A Phosphoserine modification is found at S388.

It belongs to the fl(2)d family. Component of the WMM complex, a N6-methyltransferase complex composed of a catalytic subcomplex, named MAC, and of an associated subcomplex, named MACOM. The MAC subcomplex is composed of METTL3 and METTL14. The MACOM subcomplex is composed of WTAP, ZC3H13, CBLL1/HAKAI, VIRMA, and, in some cases of RBM15 (RBM15 or RBM15B). Interacts with WT1. Also a component of a MACOM-like complex, named WTAP complex, composed of WTAP, ZC3H13, CBLL1, VIRMA, RBM15, BCLAF1 and THRAP3. Interacts with CPNE4 (via VWFA domain).

The protein localises to the nucleus speckle. Its subcellular location is the nucleus. The protein resides in the nucleoplasm. It is found in the cytoplasm. In terms of biological role, associated component of the WMM complex, a complex that mediates N6-methyladenosine (m6A) methylation of RNAs, a modification that plays a role in the efficiency of mRNA splicing and RNA processing. Acts as a key regulator of m6A methylation by promoting m6A methylation of mRNAs at the 3'-UTR. Required for accumulation of METTL3 and METTL14 to nuclear speckle. Acts as a mRNA splicing regulator. Regulates G2/M cell-cycle transition by binding to the 3' UTR of CCNA2, which enhances its stability. Impairs WT1 DNA-binding ability and inhibits expression of WT1 target genes. This is Pre-mRNA-splicing regulator WTAP from Mus musculus (Mouse).